Consider the following 455-residue polypeptide: Probable xyloglucan galactosyltransferase GT17 (455 aa).

Residues 1–34 (MTFNKRQVKINHWPEKNDKEKQKYSKNRETVKLT) lie on the Cytoplasmic side of the membrane. Residues 35 to 55 (LLTLLLLCSICFLFLTLNFPF) traverse the membrane as a helical; Signal-anchor for type II membrane protein segment. Topologically, residues 56–455 (TIEFTASIPR…QARDNVVVSL (400 aa)) are lumenal. N-linked (GlcNAc...) asparagine glycosylation is found at Asn70, Asn169, Asn230, Asn390, and Asn426.

The protein belongs to the glycosyltransferase 47 family. In terms of tissue distribution, expressed in roots and hypocotyls.

The protein resides in the golgi apparatus membrane. Its function is as follows. Functions in xyloglucan synthesis by adding side chains to the xylosylated glucan backbone. Involved in the galactosylation of hemicellulose xyloglucan. The polypeptide is Probable xyloglucan galactosyltransferase GT17 (Arabidopsis thaliana (Mouse-ear cress)).